The chain runs to 297 residues: tRNA (guanine-N(7)-)-methyltransferase (297 aa).

Residues G101, 124–125, 171–172, and C191 contribute to the S-adenosyl-L-methionine site; these read EI and NT. D194 is a catalytic residue. 270–272 lines the S-adenosyl-L-methionine pocket; it reads TEE.

The protein belongs to the class I-like SAM-binding methyltransferase superfamily. TrmB family. As to quaternary structure, forms a complex with trm82.

The protein resides in the nucleus. It carries out the reaction guanosine(46) in tRNA + S-adenosyl-L-methionine = N(7)-methylguanosine(46) in tRNA + S-adenosyl-L-homocysteine. It participates in tRNA modification; N(7)-methylguanine-tRNA biosynthesis. Its function is as follows. Catalyzes the formation of N(7)-methylguanine at position 46 (m7G46) in tRNA. The polypeptide is tRNA (guanine-N(7)-)-methyltransferase (trm8) (Aspergillus niger (strain ATCC MYA-4892 / CBS 513.88 / FGSC A1513)).